Reading from the N-terminus, the 309-residue chain is Glutaminase (309 aa).

Positions 64, 114, 160, 167, 191, 243, and 261 each coordinate substrate.

This sequence belongs to the glutaminase family. As to quaternary structure, homotetramer.

The enzyme catalyses L-glutamine + H2O = L-glutamate + NH4(+). The polypeptide is Glutaminase (Rhizobium leguminosarum bv. trifolii (strain WSM2304)).